Reading from the N-terminus, the 159-residue chain is 2-C-methyl-D-erythritol 2,4-cyclodiphosphate synthase (159 aa).

A divalent metal cation-binding residues include D8 and H10. 4-CDP-2-C-methyl-D-erythritol 2-phosphate contacts are provided by residues 8–10 (DVH) and 34–35 (HS). H42 lines the a divalent metal cation pocket. Residues 56 to 58 (DIG), 61 to 65 (FPDTD), 100 to 106 (AQAPKMA), 132 to 135 (TTTE), F139, and R142 each bind 4-CDP-2-C-methyl-D-erythritol 2-phosphate.

Belongs to the IspF family. Homotrimer. A divalent metal cation serves as cofactor.

The enzyme catalyses 4-CDP-2-C-methyl-D-erythritol 2-phosphate = 2-C-methyl-D-erythritol 2,4-cyclic diphosphate + CMP. It participates in isoprenoid biosynthesis; isopentenyl diphosphate biosynthesis via DXP pathway; isopentenyl diphosphate from 1-deoxy-D-xylulose 5-phosphate: step 4/6. Its function is as follows. Involved in the biosynthesis of isopentenyl diphosphate (IPP) and dimethylallyl diphosphate (DMAPP), two major building blocks of isoprenoid compounds. Catalyzes the conversion of 4-diphosphocytidyl-2-C-methyl-D-erythritol 2-phosphate (CDP-ME2P) to 2-C-methyl-D-erythritol 2,4-cyclodiphosphate (ME-CPP) with a corresponding release of cytidine 5-monophosphate (CMP). The sequence is that of 2-C-methyl-D-erythritol 2,4-cyclodiphosphate synthase from Cronobacter sakazakii (strain ATCC BAA-894) (Enterobacter sakazakii).